Here is a 405-residue protein sequence, read N- to C-terminus: Cytochrome P450 109 (405 aa).

Cysteine 351 contacts heme.

Belongs to the cytochrome P450 family. Requires heme as cofactor.

Functionally, cytochromes P450 are a group of heme-thiolate monooxygenases. They oxidize a variety of structurally unrelated compounds, including steroids, fatty acids, and xenobiotics. The chain is Cytochrome P450 109 (cyp109) from Bacillus spizizenii (strain ATCC 23059 / NRRL B-14472 / W23) (Bacillus subtilis subsp. spizizenii).